We begin with the raw amino-acid sequence, 392 residues long: B2 bradykinin receptor (392 aa).

Topologically, residues 1 to 61 are extracellular; it reads MPCSWKLLGF…EWWSWLNAIQ (61 aa). Residues Asn29 and Asn40 are each glycosylated (N-linked (GlcNAc...) asparagine). A helical transmembrane segment spans residues 62–85; the sequence is APFLWVLFLLAALENLFVLSVFFL. The Cytoplasmic segment spans residues 86–94; that stretch reads HKNSCTVAE. The helical transmembrane segment at 95–119 threads the bilayer; sequence IYLGNLAAADLILACGLPFWAITIA. Topologically, residues 120 to 132 are extracellular; that stretch reads NNFDWVFGEVLCR. An intrachain disulfide couples Cys131 to Cys212. The chain crosses the membrane as a helical span at residues 133–154; the sequence is VVNTMIYMNLYSSICFLMLVSI. At 155 to 176 the chain is on the cytoplasmic side; it reads DRYLALVKTMSMGRMRGVRWAK. Tyr157 is subject to Phosphotyrosine. The chain crosses the membrane as a helical span at residues 177–199; that stretch reads LYSLVIWGCTLLLSSPMLVFRTM. The Extracellular portion of the chain corresponds to 200–222; the sequence is REYSEEGHNVTACVIVYPSRSWE. A glycan (N-linked (GlcNAc...) asparagine) is linked at Asn208. A helical transmembrane segment spans residues 223–249; it reads VFTNVLLNLVGFLLPLSVITFCTVRIL. The Cytoplasmic portion of the chain corresponds to 250–268; sequence QVLRNNEMKKFKEVQTERK. A helical membrane pass occupies residues 269 to 293; that stretch reads ATVLVLAVLGLFVLCWVPFQISTFL. The Extracellular portion of the chain corresponds to 294–312; the sequence is DTLLRLGVLSGCWDEHAVD. A helical membrane pass occupies residues 313-336; the sequence is VITQISSYVAYSNSGLNPLVYVIV. Residues 337–392 are Cytoplasmic-facing; the sequence is GKRFRKKSREVYRVLCQKGGCMGEPVQMENSMGTLRTSISVERQIHKLQDWAGKKQ. Position 348 is a phosphotyrosine (Tyr348). A lipid anchor (S-palmitoyl cysteine) is attached at Cys352. Phosphoserine is present on Ser367. Thr370 bears the Phosphothreonine mark. Residues Ser374 and Ser376 each carry the phosphoserine; by GRK6 modification.

It belongs to the G-protein coupled receptor 1 family. Bradykinin receptor subfamily. BDKRB2 sub-subfamily. In terms of assembly, forms a complex with PECAM1 and GNAQ. Interacts with PECAM1.

It localises to the cell membrane. Receptor for bradykinin. It is associated with G proteins that activate a phosphatidylinositol-calcium second messenger system. This is B2 bradykinin receptor (Bdkrb2) from Mus musculus (Mouse).